Here is a 478-residue protein sequence, read N- to C-terminus: Ankyrin repeat and BTB/POZ domain-containing protein 1 (478 aa).

ANK repeat units lie at residues 1–31 and 35–64; these read MDTSDLFASCRKGDVGRVRYLLEQRDVEVNV and WDSTPLYYACLCGHEELVLYLLANGARCEA. BTB domains lie at 115–182 and 272–346; these read SDVV…DIGV and PDIC…ELSP. Residues 451–477 adopt a coiled-coil conformation; sequence VQTYSAIEEAQQRLRALEDLLVSIGLD.

Ubiquitously expressed in all fetal tissues examined including heart, brain, liver, and kidney. Also expressed at lower levels in both adult heart and hypertrophic heart.

Its subcellular location is the cytoplasm. Functionally, may act as a mediator of the PTEN growth-suppressive signaling pathway. May play a role in developmental processes. In Homo sapiens (Human), this protein is Ankyrin repeat and BTB/POZ domain-containing protein 1.